The following is a 449-amino-acid chain: Tubulin alpha-1C chain (449 aa).

The short motif at 1 to 4 (MREC) is the MREC motif element. GTP is bound at residue Gln11. N6-acetyllysine is present on Lys40. Residues Glu71, Ser140, Gly144, Thr145, Thr179, Asn206, and Asn228 each contribute to the GTP site. Residue Glu71 coordinates Mg(2+). The active site involves Glu254. Tyr282 carries the 3'-nitrotyrosine modification. The segment at 429–449 (EKDYEEVGADSAEGDDEGDEY) is disordered. Acidic residues predominate over residues 431-449 (DYEEVGADSAEGDDEGDEY). A Phosphotyrosine modification is found at Tyr432. A Phosphoserine modification is found at Ser439. 3'-nitrotyrosine is present on Tyr449.

It belongs to the tubulin family. As to quaternary structure, dimer of alpha and beta chains. A typical microtubule is a hollow water-filled tube with an outer diameter of 25 nm and an inner diameter of 15 nM. Alpha-beta heterodimers associate head-to-tail to form protofilaments running lengthwise along the microtubule wall with the beta-tubulin subunit facing the microtubule plus end conferring a structural polarity. Microtubules usually have 13 protofilaments but different protofilament numbers can be found in some organisms and specialized cells. It depends on Mg(2+) as a cofactor. Some glutamate residues at the C-terminus are polyglycylated, resulting in polyglycine chains on the gamma-carboxyl group. Glycylation is mainly limited to tubulin incorporated into axonemes (cilia and flagella) whereas glutamylation is prevalent in neuronal cells, centrioles, axonemes, and the mitotic spindle. Both modifications can coexist on the same protein on adjacent residues, and lowering polyglycylation levels increases polyglutamylation, and reciprocally. Cilia and flagella glycylation is required for their stability and maintenance. Flagella glycylation controls sperm motility. Post-translationally, some glutamate residues at the C-terminus are polyglutamylated, resulting in polyglutamate chains on the gamma-carboxyl group. Polyglutamylation plays a key role in microtubule severing by spastin (SPAST). SPAST preferentially recognizes and acts on microtubules decorated with short polyglutamate tails: severing activity by SPAST increases as the number of glutamates per tubulin rises from one to eight, but decreases beyond this glutamylation threshold. Glutamylation is also involved in cilia motility. In terms of processing, acetylation of alpha chains at Lys-40 is located inside the microtubule lumen. This modification has been correlated with increased microtubule stability, intracellular transport and ciliary assembly. Methylation of alpha chains at Lys-40 is found in mitotic microtubules and is required for normal mitosis and cytokinesis contributing to genomic stability. Post-translationally, nitration of Tyr-449 is irreversible and interferes with normal dynein intracellular distribution. In terms of processing, undergoes a tyrosination/detyrosination cycle, the cyclic removal and re-addition of a C-terminal tyrosine residue by the enzymes tubulin tyrosine carboxypeptidase (MATCAP1, VASH1 or VASH2) and tubulin tyrosine ligase (TTL), respectively. Tyrosination promotes microtubule interaction with CAP-Gly domain-containing proteins such as CLIP1, CLIP2 and DCTN1. Tyrosination regulates the initiation of dynein-dynactin motility via interaction with DCTN1, which brings the dynein-dynactin complex into contact with microtubules. In neurons, tyrosinated tubulins mediate the initiation of retrograde vesicle transport. Post-translationally, detyrosination is involved in metaphase plate congression by guiding chromosomes during mitosis: detyrosination promotes interaction with CENPE, promoting pole-proximal transport of chromosomes toward the equator. Detyrosination increases microtubules-dependent mechanotransduction in dystrophic cardiac and skeletal muscle. In cardiomyocytes, detyrosinated microtubules are required to resist to contractile compression during contraction: detyrosination promotes association with desmin (DES) at force-generating sarcomeres, leading to buckled microtubules and mechanical resistance to contraction.

It localises to the cytoplasm. Its subcellular location is the cytoskeleton. It catalyses the reaction GTP + H2O = GDP + phosphate + H(+). In terms of biological role, tubulin is the major constituent of microtubules, a cylinder consisting of laterally associated linear protofilaments composed of alpha- and beta-tubulin heterodimers. Microtubules grow by the addition of GTP-tubulin dimers to the microtubule end, where a stabilizing cap forms. Below the cap, tubulin dimers are in GDP-bound state, owing to GTPase activity of alpha-tubulin. This chain is Tubulin alpha-1C chain (TUBA1C), found in Bos taurus (Bovine).